Reading from the N-terminus, the 81-residue chain is uncharacterized protein (81 aa).

The segment at 11 to 34 (GSVSSSNKVSVANGSSSSSFGSNG) is disordered.

This is an uncharacterized protein from Dictyostelium discoideum (Social amoeba).